The chain runs to 157 residues: uncharacterized protein (157 aa).

One can recognise an N-acetyltransferase domain in the interval 9–146 (LLINYKTLDE…GDFYVWHPET (138 aa)).

This is an uncharacterized protein from Bacillus anthracis (strain CDC 684 / NRRL 3495).